The following is a 336-amino-acid chain: Fructose-1,6-bisphosphatase class 1 (336 aa).

Residues Glu-91, Asp-114, Leu-116, and Asp-117 each contribute to the Mg(2+) site. Substrate is bound by residues 117–120 (DGSS), Asn-210, Tyr-243, and Lys-273. Position 279 (Glu-279) interacts with Mg(2+).

Belongs to the FBPase class 1 family. As to quaternary structure, homotetramer. Requires Mg(2+) as cofactor.

It localises to the cytoplasm. It catalyses the reaction beta-D-fructose 1,6-bisphosphate + H2O = beta-D-fructose 6-phosphate + phosphate. It participates in carbohydrate biosynthesis; gluconeogenesis. This chain is Fructose-1,6-bisphosphatase class 1, found in Dichelobacter nodosus (strain VCS1703A).